The sequence spans 200 residues: ATP-dependent Clp protease proteolytic subunit (200 aa).

S101 functions as the Nucleophile in the catalytic mechanism. H126 is a catalytic residue.

This sequence belongs to the peptidase S14 family. As to quaternary structure, component of the chloroplastic Clp protease core complex.

Its subcellular location is the plastid. It localises to the chloroplast stroma. The catalysed reaction is Hydrolysis of proteins to small peptides in the presence of ATP and magnesium. alpha-casein is the usual test substrate. In the absence of ATP, only oligopeptides shorter than five residues are hydrolyzed (such as succinyl-Leu-Tyr-|-NHMec, and Leu-Tyr-Leu-|-Tyr-Trp, in which cleavage of the -Tyr-|-Leu- and -Tyr-|-Trp bonds also occurs).. Its function is as follows. Cleaves peptides in various proteins in a process that requires ATP hydrolysis. Has a chymotrypsin-like activity. Plays a major role in the degradation of misfolded proteins. This chain is ATP-dependent Clp protease proteolytic subunit, found in Adiantum capillus-veneris (Maidenhair fern).